Consider the following 290-residue polypeptide: 3-hydroxyacyl-thioester dehydratase Y (290 aa).

The tract at residues 147–169 (FGGARGERPAAPEFPDRHPDARI) is disordered. The segment covering 151–169 (RGERPAAPEFPDRHPDARI) has biased composition (basic and acidic residues). In terms of domain architecture, MaoC-like spans 161–271 (PDRHPDARID…AVFRTEVAGS (111 aa)).

It belongs to the enoyl-CoA hydratase/isomerase family.

It catalyses the reaction a (3R)-3-hydroxyacyl-CoA = a (2E)-enoyl-CoA + H2O. The enzyme catalyses (3R)-hydroxyhexanoyl-CoA = (2E)-hexenoyl-CoA + H2O. It carries out the reaction (2E)-octenoyl-CoA + H2O = (3R)-hydroxyoctanoyl-CoA. The catalysed reaction is (3R)-3-hydroxydecanoyl-CoA = (2E)-decenoyl-CoA + H2O. It catalyses the reaction (3R)-3-hydroxydodecanoyl-CoA = (2E)-dodecenoyl-CoA + H2O. The enzyme catalyses (3R)-hydroxyhexadecanoyl-CoA = (2E)-hexadecenoyl-CoA + H2O. Shows trans-enoyl-CoA hydratase/3-hydroxyacyl-CoA dehydratase activity. In vitro, can hydrate various enoyl-CoA such as (2E)-hexenoyl-CoA, (2E)-octenoyl-CoA, (2E)-decenoyl-CoA, (2E)-dodecenoyl-CoA and (2E)-hexadecenoyl-CoA. May contribute to the persistence of the tuberculosis infection by inducing COX-2 expression in macrophages through MAPK-NF-kappaB signaling pathway. The sequence is that of 3-hydroxyacyl-thioester dehydratase Y from Mycobacterium tuberculosis (strain ATCC 25618 / H37Rv).